The primary structure comprises 1065 residues: N-terminal acetyltransferase B complex auxiliary subunit NAA25 (1065 aa).

The stretch at 294 to 327 is one TPR repeat; that stretch reads VDKLRIQGRLLARANDYSAAVDVYKKILELSPDD.

It belongs to the MDM20/NAA25 family. Ubiquitously expressed, with a higher expression in vascular bundles, hydathodes, leaf primordia and the base of the trichomes.

Its subcellular location is the cytoplasm. In terms of biological role, auxiliary subunit of the NatB N-alpha-acetyltransferase complex. Required for flowering time regulation and for vegetative and reproductive plant development. This chain is N-terminal acetyltransferase B complex auxiliary subunit NAA25, found in Arabidopsis thaliana (Mouse-ear cress).